The sequence spans 98 residues: uncharacterized protein (98 aa).

Helical transmembrane passes span 14 to 34 (FLVILCMVAFLAGCTQSPVTA) and 41 to 61 (MTGAQPVLIWLLISSIIASII).

The protein resides in the cell membrane. This is an uncharacterized protein from Haemophilus influenzae (strain ATCC 51907 / DSM 11121 / KW20 / Rd).